We begin with the raw amino-acid sequence, 264 residues long: Apolipoprotein A-I (264 aa).

Positions 1–18 (MKTVVLAVAVLFLTGSQA) are cleaved as a signal peptide. Repeat copies occupy residues 67–88 (LNLLENWDTLGSTVGRLQEQLG) and 89–110 (PVTQEFWDNLEKETEWLRREMN). The 10 X approximate tandem repeats stretch occupies residues 67 to 264 (LNLLENWDTL…EEASKKLNAQ (198 aa)). M109 carries the post-translational modification Methionine sulfoxide. Residues 111–121 (KDLEEVKAKVQ) form a 3; half-length repeat. A run of 5 repeats spans residues 122–143 (PYLDQFQTKWQEEVALYRQKME), 144–165 (PLGAELRDGARQKLQELQEKLT), 166–187 (PLGEDLRDRMRHHVDALRTKMT), 188–207 (PYSDQMRDRLAERLAQLKDS), and 208–229 (PTLAEYHTKAADHLKAFGEKAK). Residue M193 is modified to Methionine sulfoxide. The 9; half-length repeat unit spans residues 230-240 (PALEDLRQGLM). Position 240 is a methionine sulfoxide (M240). Repeat 10 spans residues 241–264 (PVFESFKTRIMSMVEEASKKLNAQ).

It belongs to the apolipoprotein A1/A4/E family. Homodimer. Interacts with APOA1BP and CLU. Component of a sperm activating protein complex (SPAP), consisting of APOA1, an immunoglobulin heavy chain, an immunoglobulin light chain and albumin. Interacts with NDRG1. Interacts with SCGB3A2. Interacts with NAXE and YJEFN3. Post-translationally, glycosylated. In terms of processing, palmitoylated. Phosphorylation sites are present in the extracellular medium. In terms of tissue distribution, major protein of plasma HDL, also found in chylomicrons.

It is found in the secreted. In terms of biological role, participates in the reverse transport of cholesterol from tissues to the liver for excretion by promoting cholesterol efflux from tissues and by acting as a cofactor for the lecithin cholesterol acyltransferase (LCAT). As part of the SPAP complex, activates spermatozoa motility. This Mesocricetus auratus (Golden hamster) protein is Apolipoprotein A-I (APOAI).